Here is a 1005-residue protein sequence, read N- to C-terminus: Beta/gamma crystallin domain-containing protein 3 (1005 aa).

Residues Ser-122, Ser-129, Ser-130, Ser-136, and Ser-140 each carry the phosphoserine modification. 2 disordered regions span residues 132–159 (EDVLSSEVSPGHHGSSKSRESANQPSSV) and 173–198 (NFDGDDRQEAEEEEEEAVASGKDWRT). A compositionally biased stretch (acidic residues) spans 180-189 (QEAEEEEEEA). Beta/gamma crystallin 'Greek key' domains are found at residues 367 to 416 (GCWI…KRVL), 462 to 500 (GVWLAYPDIHFKGQATILEEDQGLFEISAAEMKSLHPLQ), 512 to 556 (LKVI…RVIG), 557 to 599 (GVWV…RYLQ), 605 to 647 (SSIT…HVKS), 648 to 690 (GVWV…RPIQ), 701 to 737 (HLLKAFSKAGFQGECIDFVKECADLTSFTPASFKVLR), 738 to 781 (GCWL…QPID), and 828 to 869 (GLWI…RPMK). A Ricin B-type lectin domain is found at 871-1003 (PAVYIRIRNR…GEETQKWDIE (133 aa)).

It belongs to the beta/gamma-crystallin family.

The protein is Beta/gamma crystallin domain-containing protein 3 (Crybg3) of Mus musculus (Mouse).